The following is a 378-amino-acid chain: Erythronate-4-phosphate dehydrogenase (378 aa).

Substrate-binding residues include Ser45 and Thr66. Residues Asp146 and Thr175 each contribute to the NAD(+) site. The active site involves Arg208. An NAD(+)-binding site is contributed by Asp232. Glu237 is a catalytic residue. His254 functions as the Proton donor in the catalytic mechanism. Gly257 is a binding site for NAD(+). A substrate-binding site is contributed by Tyr258.

The protein belongs to the D-isomer specific 2-hydroxyacid dehydrogenase family. PdxB subfamily. In terms of assembly, homodimer.

It is found in the cytoplasm. The enzyme catalyses 4-phospho-D-erythronate + NAD(+) = (R)-3-hydroxy-2-oxo-4-phosphooxybutanoate + NADH + H(+). It participates in cofactor biosynthesis; pyridoxine 5'-phosphate biosynthesis; pyridoxine 5'-phosphate from D-erythrose 4-phosphate: step 2/5. Its function is as follows. Catalyzes the oxidation of erythronate-4-phosphate to 3-hydroxy-2-oxo-4-phosphonooxybutanoate. In Escherichia coli (strain ATCC 8739 / DSM 1576 / NBRC 3972 / NCIMB 8545 / WDCM 00012 / Crooks), this protein is Erythronate-4-phosphate dehydrogenase.